Consider the following 159-residue polypeptide: Na(+)/H(+) antiporter subunit E1 (159 aa).

4 consecutive transmembrane segments (helical) span residues 1–21, 27–47, 49–69, and 101–121; these read MAVQ…VTNS, FVLG…VLPG, FYVI…IELI, and WQIV…VLGV.

Belongs to the CPA3 antiporters (TC 2.A.63) subunit E family. In terms of assembly, may form a heterooligomeric complex that consists of seven subunits: mnhA1, mnhB1, mnhC1, mnhD1, mnhE1, mnhF1 and mnhG1.

Its subcellular location is the cell membrane. Mnh complex is a Na(+)/H(+) antiporter involved in Na(+) excretion. This is Na(+)/H(+) antiporter subunit E1 (mnhE1) from Staphylococcus aureus (strain bovine RF122 / ET3-1).